The chain runs to 321 residues: Cytochrome c biogenesis protein CcsA (321 aa).

8 consecutive transmembrane segments (helical) span residues 17 to 37, 46 to 63, 71 to 91, 98 to 118, 143 to 163, 225 to 245, 259 to 273, and 286 to 306; these read VVSIVITIHLITLLVDEIIGL, MTTFFCITGLLMTRWIYL, LYESLIFLSWSFSIIHMVPYF, LKAITAPSAIFTQGFATSGLL, MVLGYAALLCGSLLSLALLVI, IISLGFIFLTIGILSGAVWAN, TWAFITWTLFSIYLH, and AIVASMGFLIIWICYFGVNLL.

The protein belongs to the CcmF/CycK/Ccl1/NrfE/CcsA family. In terms of assembly, may interact with Ccs1.

The protein localises to the plastid. Its subcellular location is the chloroplast thylakoid membrane. Functionally, required during biogenesis of c-type cytochromes (cytochrome c6 and cytochrome f) at the step of heme attachment. The polypeptide is Cytochrome c biogenesis protein CcsA (Morus indica (Mulberry)).